Reading from the N-terminus, the 341-residue chain is Methionine import ATP-binding protein MetN (341 aa).

An ABC transporter domain is found at 9–247 (ISVEQLNKEI…PQSAITEELF (239 aa)). 41–48 (GHSGSGKS) is a binding site for ATP.

Belongs to the ABC transporter superfamily. Methionine importer (TC 3.A.1.24) family. The complex is composed of two ATP-binding proteins (MetN), two transmembrane proteins (MetI) and a solute-binding protein (MetQ).

It is found in the cell inner membrane. The enzyme catalyses L-methionine(out) + ATP + H2O = L-methionine(in) + ADP + phosphate + H(+). It catalyses the reaction D-methionine(out) + ATP + H2O = D-methionine(in) + ADP + phosphate + H(+). Functionally, part of the ABC transporter complex MetNIQ involved in methionine import. Responsible for energy coupling to the transport system. In Chlamydia abortus (strain DSM 27085 / S26/3) (Chlamydophila abortus), this protein is Methionine import ATP-binding protein MetN.